We begin with the raw amino-acid sequence, 413 residues long: Tyrosine--tRNA ligase (413 aa).

The short motif at 59–68 (PTAPDIHLGH) is the 'HIGH' region element. Positions 243-247 (KMSKS) match the 'KMSKS' region motif. Lysine 246 is an ATP binding site. The S4 RNA-binding domain occupies 351–411 (LAIGQLLKQA…GKRRFARVTL (61 aa)).

Belongs to the class-I aminoacyl-tRNA synthetase family. TyrS type 2 subfamily. As to quaternary structure, homodimer.

The protein localises to the cytoplasm. It catalyses the reaction tRNA(Tyr) + L-tyrosine + ATP = L-tyrosyl-tRNA(Tyr) + AMP + diphosphate + H(+). Catalyzes the attachment of tyrosine to tRNA(Tyr) in a two-step reaction: tyrosine is first activated by ATP to form Tyr-AMP and then transferred to the acceptor end of tRNA(Tyr). This Burkholderia mallei (strain ATCC 23344) protein is Tyrosine--tRNA ligase.